The sequence spans 333 residues: Adenosine deaminase (333 aa).

Residues histidine 12 and histidine 14 each coordinate Zn(2+). Substrate contacts are provided by histidine 14, aspartate 16, and glycine 170. A Zn(2+)-binding site is contributed by histidine 197. Glutamate 200 acts as the Proton donor in catalysis. Residue aspartate 278 participates in Zn(2+) binding. Aspartate 279 lines the substrate pocket.

Belongs to the metallo-dependent hydrolases superfamily. Adenosine and AMP deaminases family. Adenosine deaminase subfamily. Zn(2+) serves as cofactor.

The enzyme catalyses adenosine + H2O + H(+) = inosine + NH4(+). It carries out the reaction 2'-deoxyadenosine + H2O + H(+) = 2'-deoxyinosine + NH4(+). Functionally, catalyzes the hydrolytic deamination of adenosine and 2-deoxyadenosine. The sequence is that of Adenosine deaminase from Aliivibrio fischeri (strain ATCC 700601 / ES114) (Vibrio fischeri).